We begin with the raw amino-acid sequence, 251 residues long: NADPH-dependent oxidoreductase (251 aa).

It belongs to the flavin oxidoreductase frp family. The cofactor is FMN.

Its function is as follows. Reduces FMN, organic nitro compounds and disulfide DTNB. Involved in maintenance of the cellular redox state and the disulfide stress response. This chain is NADPH-dependent oxidoreductase (nfrA), found in Staphylococcus haemolyticus (strain JCSC1435).